The sequence spans 335 residues: COP9 signalosome complex subunit 5 (335 aa).

The MPN domain occupies 51–187 (VRISAVALLK…IGAFRTFPKD (137 aa)). Zn(2+) contacts are provided by His134, His136, and Asp147. Residues 134-147 (HSHPGYGCWLSGID) carry the JAMM motif motif.

Belongs to the peptidase M67A family. CSN5 subfamily. As to quaternary structure, component of the COP9 signalosome (CSN) complex.

It is found in the cytoplasm. It localises to the nucleus. Its function is as follows. Catalytic component of the COP9 signalosome (CSN) complex that acts as an regulator of the ubiquitin (Ubl) conjugation pathway by mediating the deneddylation of the cullin subunit of SCF-type E3 ubiquitin-protein ligase complexes. The CSN complex seems to link protein degradation to sexual development. Required for fruit body formation. This Emericella nidulans (strain FGSC A4 / ATCC 38163 / CBS 112.46 / NRRL 194 / M139) (Aspergillus nidulans) protein is COP9 signalosome complex subunit 5 (rri1).